The primary structure comprises 445 residues: UPF0210 protein SPH_0352 (445 aa).

It belongs to the UPF0210 family. In terms of assembly, homodimer.

The chain is UPF0210 protein SPH_0352 from Streptococcus pneumoniae (strain Hungary19A-6).